Here is a 376-residue protein sequence, read N- to C-terminus: Phospho-N-acetylmuramoyl-pentapeptide-transferase (376 aa).

A run of 10 helical transmembrane segments spans residues 28 to 48 (RTIMATITAMVLTFVLAPWFI), 76 to 96 (TMGGALILLSLLLPTVLWADL), 100 to 120 (FVLATTAVTAGYGVIGYLDDF), 135 to 155 (YKLIGQVLIGGAAVAYTFLLA), 179 to 199 (YPIELPLYVYIPFAVFVVVAT), 211 to 231 (GLAIGPVIINAGTYLILAYIV), 252 to 272 (AGELSVYCGSVIGAGIGFLWY), 279 to 299 (VFMGDVGSLALGGGLGMLAVF), 307 to 327 (IILGGIFFIETVSVITQVLSF), and 353 to 373 (KIIVRFWIISILLALVSLASM).

Belongs to the glycosyltransferase 4 family. MraY subfamily. It depends on Mg(2+) as a cofactor.

Its subcellular location is the cell inner membrane. The enzyme catalyses UDP-N-acetyl-alpha-D-muramoyl-L-alanyl-gamma-D-glutamyl-meso-2,6-diaminopimeloyl-D-alanyl-D-alanine + di-trans,octa-cis-undecaprenyl phosphate = di-trans,octa-cis-undecaprenyl diphospho-N-acetyl-alpha-D-muramoyl-L-alanyl-D-glutamyl-meso-2,6-diaminopimeloyl-D-alanyl-D-alanine + UMP. It participates in cell wall biogenesis; peptidoglycan biosynthesis. In terms of biological role, catalyzes the initial step of the lipid cycle reactions in the biosynthesis of the cell wall peptidoglycan: transfers peptidoglycan precursor phospho-MurNAc-pentapeptide from UDP-MurNAc-pentapeptide onto the lipid carrier undecaprenyl phosphate, yielding undecaprenyl-pyrophosphoryl-MurNAc-pentapeptide, known as lipid I. This chain is Phospho-N-acetylmuramoyl-pentapeptide-transferase, found in Sorangium cellulosum (strain So ce56) (Polyangium cellulosum (strain So ce56)).